The sequence spans 136 residues: Translation initiation factor 5A (136 aa).

Residue lysine 37 is modified to Hypusine.

Belongs to the eIF-5A family.

It localises to the cytoplasm. Its function is as follows. Functions by promoting the formation of the first peptide bond. The sequence is that of Translation initiation factor 5A (eIF5A) from Thermococcus gammatolerans (strain DSM 15229 / JCM 11827 / EJ3).